Consider the following 522-residue polypeptide: Leucine-rich repeat transmembrane neuronal protein 1 (522 aa).

An N-terminal signal peptide occupies residues 1-34; it reads MDFLLLGLCLYWLLRRPSGVVLCLLGACFQMLPA. The region spanning 35 to 63 is the LRRNT domain; that stretch reads APSGCPQLCRCEGRLLYCEALNLTEAPHN. The Extracellular portion of the chain corresponds to 35–427; it reads APSGCPQLCR…HAENAVQIHK (393 aa). Residues asparagine 56 and asparagine 63 are each glycosylated (N-linked (GlcNAc...) asparagine). 10 LRR repeats span residues 64–87, 89–111, 112–135, 137–159, 161–183, 184–207, 209–231, 233–255, 256–278, and 279–302; these read LSGL…QFTG, MQLT…AFQK, LRRV…TFRP, PNLR…LFHG, RKLT…IFQD, CRSL…SFAG, FKLT…HFPR, ISLH…LDWV, WNLE…VFET, and VPHL…ILNS. Residue asparagine 130 is glycosylated (N-linked (GlcNAc...) asparagine). One can recognise an LRRCT domain in the interval 314 to 365; that stretch reads NLWDCGRNVCALASWLNNFQGRYDGNLQCASPEYAQGEDVLDAVYAFHLCED. N-linked (GlcNAc...) asparagine glycosylation is present at asparagine 380. The disordered stretch occupies residues 382-401; the sequence is SDLGPPASSATTLADGGEGQ. A helical transmembrane segment spans residues 428–448; that stretch reads VVTGTMALIFSFLIVVLVLYV. Residues 449–522 lie on the Cytoplasmic side of the membrane; that stretch reads SWKCFPASLR…HQQPARECEV (74 aa).

This sequence belongs to the LRRTM family. Predominantly expressed in forebrain regions including thalamus and cerebral cortex.

The protein localises to the cell membrane. Its subcellular location is the postsynaptic cell membrane. Its function is as follows. Exhibits strong synaptogenic activity, restricted to excitatory presynaptic differentiation, acting at both pre- and postsynaptic level. The chain is Leucine-rich repeat transmembrane neuronal protein 1 (LRRTM1) from Homo sapiens (Human).